The sequence spans 311 residues: Serpentine receptor class gamma-6 (311 aa).

The next 7 helical transmembrane spans lie at 24–44 (MGQL…IYVI), 58–78 (FWLL…FDIF), 101–121 (PLLI…KMVA), 148–168 (LTAC…NILI), 200–220 (YMQI…AILW), 235–255 (IWFA…YLHM), and 266–286 (IFML…VIMI).

This sequence belongs to the nematode receptor-like protein srg family.

The protein resides in the membrane. In Caenorhabditis elegans, this protein is Serpentine receptor class gamma-6 (srg-6).